A 619-amino-acid chain; its full sequence is Lateral signaling target protein 2 homolog (619 aa).

The FYVE-type zinc-finger motif lies at 501-561; that stretch reads DSDCEQCTAC…VCNLCFLYKI (61 aa). Residues cysteine 507, cysteine 510, cysteine 523, cysteine 526, cysteine 531, cysteine 534, cysteine 553, and cysteine 556 each coordinate Zn(2+). The segment at 598-619 is disordered; sequence HERSQDGSQSNESPTATTATTI. Residues 603–619 show a composition bias toward polar residues; it reads DGSQSNESPTATTATTI.

This sequence belongs to the lst-2 family.

Negative regulator of epidermal growth factor receptor (EGFR) signaling. This chain is Lateral signaling target protein 2 homolog, found in Brugia malayi (Filarial nematode worm).